We begin with the raw amino-acid sequence, 164 residues long: Large ribosomal subunit protein uL10 (164 aa).

The protein belongs to the universal ribosomal protein uL10 family. Part of the ribosomal stalk of the 50S ribosomal subunit. The N-terminus interacts with L11 and the large rRNA to form the base of the stalk. The C-terminus forms an elongated spine to which L12 dimers bind in a sequential fashion forming a multimeric L10(L12)X complex.

Functionally, forms part of the ribosomal stalk, playing a central role in the interaction of the ribosome with GTP-bound translation factors. The polypeptide is Large ribosomal subunit protein uL10 (Helicobacter pylori (strain G27)).